We begin with the raw amino-acid sequence, 135 residues long: Type 3 secretion system stator protein (135 aa).

Belongs to the SctL stator family. The core secretion machinery of the T3SS is composed of approximately 20 different proteins, including cytoplasmic components, a base, an export apparatus and a needle. This subunit is part of the cytosolic complex.

It is found in the cytoplasm. In terms of biological role, component of the type III secretion system (T3SS), also called injectisome, which is used to inject bacterial effector proteins into eukaryotic host cells. Acts as a regulator of the HrcN/SctN ATPase activity. The sequence is that of Type 3 secretion system stator protein from Rhizobium fredii (Sinorhizobium fredii).